A 117-amino-acid chain; its full sequence is UPF0251 protein DehaBAV1_0135 (117 aa).

It belongs to the UPF0251 family.

The chain is UPF0251 protein DehaBAV1_0135 from Dehalococcoides mccartyi (strain ATCC BAA-2100 / JCM 16839 / KCTC 5957 / BAV1).